A 320-amino-acid chain; its full sequence is MATAQSPTQLVRTLIDVSRFDKYNCLFAIFPGVWSIFLAAASRHADGVHLPSDWVLGRAGLAFAYTYLLSGAGMVWNDWIDRDIDAQVARTKNRPLASGRLATRAAIIWMLVQYAASVWLMDRMLSGQNLWTFMLPLTTGIILYPFGKRPTTRKLGIYPQYILGASSALTILPAWASVYGDSVAPPDLLAKCLPLCVFLFLWTIYFNTAYSYQDVKDDCRLSVNSSYVLAGQYVHGLLLLQAVAVVMVIPWILHENGSAWLWFSWLGVWTAALAEQLYLFDTKDPSTGGRVHRRNFALGIWNVLACFVELLLVSGSLDMF.

6 helical membrane-spanning segments follow: residues 22-42 (KYNCLFAIFPGVWSIFLAAAS), 60-80 (GLAFAYTYLLSGAGMVWNDWI), 101-121 (LATRAAIIWMLVQYAASVWLM), 127-147 (GQNLWTFMLPLTTGIILYPFG), 155-175 (LGIYPQYILGASSALTILPAW), and 186-206 (PDLLAKCLPLCVFLFLWTIYF). Asn224 is a glycosylation site (N-linked (GlcNAc...) asparagine). A helical membrane pass occupies residues 233 to 253 (YVHGLLLLQAVAVVMVIPWIL). The N-linked (GlcNAc...) asparagine glycan is linked to Asn256. Helical transmembrane passes span 260-280 (WLWFSWLGVWTAALAEQLYLF) and 296-316 (FALGIWNVLACFVELLLVSGS).

The protein belongs to the UbiA prenyltransferase family. Mg(2+) is required as a cofactor.

Its subcellular location is the membrane. It catalyses the reaction 4-hydroxy-6-(pyridin-3-yl)-2H-pyran-2-one + (2E,6E)-farnesyl diphosphate = 4-hydroxy-3-[(2E,6E)-farnesyl]-6-(pyridin-3-yl)-2H-pyran-2-one + diphosphate. It functions in the pathway secondary metabolite biosynthesis; terpenoid biosynthesis. Its function is as follows. Polyprenyl transferase; part of the gene cluster that mediates the biosynthesis of pyripyropene A, a specific human acyl-coenzyme A:cholesterol acyltransferase 2 inhibitor. The first step of the pathway is the synthesis of nicotinyl-CoA from nicotinic acid by the nicotinic acid-CoA ligase pyr1. Nicotinyl-CoA is then a substrate of polyketide synthase pyr2 to produce 4-hydroxy-6-(3-pyridinyl)-2H-pyran-2-one (HPPO) which is further prenylated by the polyprenyl transferase pyr6 to yield farnesyl-HPPO. The next steps consist of an epoxidation of farnesyl-HPPO to epoxyfarnesyl-HPPO by FAD-dependent monooxygenase pyr5 and a cyclization of the terpenoid portion by the terpene cyclase pyr4 to yield deacetyl-pyripyropene E. The 2 cytochrome P450 monooxygenases pyr3 and pyr9, and the 2 acetyltransferases pyr7 and pyr8 are involved in the conversion of deacetyl-pyripyropene E into pyripyropene A through several cycles of oxidation and acetylation steps. Pyr7 acetylates deacetyl-pyripyropene E to pyripyropene E which is oxidized to 11-deacetyl-pyripyropene O by pyr3, which is in turn acetylated into pyripyropene O by pyr8. Pyripyropene O is then oxidized to deacetyl-pyripyropene A by pyr9. Deacetyl-pyripyropene A is finally acetylated to pyripyropene A by pyr8. In Aspergillus fumigatus (strain ATCC MYA-4609 / CBS 101355 / FGSC A1100 / Af293) (Neosartorya fumigata), this protein is Polyprenyl transferase pyr6.